Here is a 249-residue protein sequence, read N- to C-terminus: Small ribosomal subunit protein uS2 (249 aa).

The protein belongs to the universal ribosomal protein uS2 family.

This chain is Small ribosomal subunit protein uS2, found in Polynucleobacter necessarius subsp. necessarius (strain STIR1).